A 431-amino-acid polypeptide reads, in one-letter code: 3'3'-cGAMP-specific phosphodiesterase 1 (431 aa).

Positions 39 to 155 (DINHGHRVGY…IFLADRVDYL (117 aa)) constitute an HD domain. An HD-GYP domain is found at 231 to 427 (GVEEIMSIAM…YYQLSIAESP (197 aa)). Positions 288 and 289 each coordinate a divalent metal cation. The active-site Proton donor is the K292. H317, H341, H342, and D370 together coordinate a divalent metal cation.

Monomer. The cofactor is Ca(2+). Mg(2+) is required as a cofactor.

It carries out the reaction 3',3'-cGAMP + H2O = 5'-pApG-3' + H(+). It catalyses the reaction 5'-pApG-3' + H2O = 5'-ApG-3' + phosphate. Phosphodiesterase (PDE) that catalyzes the hydrolysis of 3'3'-cyclic GMP-AMP (3'3'-cGAMP), leading to linear 5'-pApG. Also displays 5'-nucleotidase activity, further hydrolyzing 5'-pApG to 5'-ApG. Counteracts the function of the 3'3'-cGAMP synthase DncV, and is involved in the modulation of intracellular 3'3'-cGAMP levels. Enhances bacterial chemotaxis and inhibits intestinal colonization in vivo. Thus exerts a crucial role in regulating bacterial infectivity through catalyzing 3'3'-cGAMP degradation. Is specific for 3'3'-cGAMP since it cannot degrade other cGAMP linkage isomers (3'2'-, 2'3'-, and 2'2'-cGAMPs). Is also able to hydrolyze c-di-GMP but not c-di-AMP. The chain is 3'3'-cGAMP-specific phosphodiesterase 1 from Vibrio cholerae serotype O1 (strain ATCC 39315 / El Tor Inaba N16961).